The following is a 156-amino-acid chain: Ribonuclease pancreatic (156 aa).

Positions 1 to 28 are cleaved as a signal peptide; the sequence is MALEKSLVLLPLLVLILLVLGWVQPSLG. Basic and acidic residues predominate over residues 33–43; sequence AKKFQRQHVDS. Residues 33-53 are disordered; that stretch reads AKKFQRQHVDSDSSPSSSSTY. Positions 35 and 38 each coordinate substrate. The active-site Proton acceptor is H40. 4 cysteine pairs are disulfide-bonded: C54/C112, C68/C123, C86/C138, and C93/C100. Residue N62 is glycosylated (N-linked (GlcNAc...) asparagine). Substrate is bound by residues 69–73 and K94; that span reads KPVNT. N104 carries an N-linked (GlcNAc...) asparagine glycan. R113 is a binding site for substrate. A glycan (N-linked (GlcNAc...) asparagine) is linked at N116. The active-site Proton donor is H147.

It belongs to the pancreatic ribonuclease family. In terms of assembly, monomer. Interacts with and forms tight 1:1 complexes with RNH1. Dimerization of two such complexes may occur. Interaction with RNH1 inhibits this protein. Pancreas and other tissues and body fluids (indicating it may have other physiological functions besides its role in digestion).

It is found in the secreted. The enzyme catalyses an [RNA] containing cytidine + H2O = an [RNA]-3'-cytidine-3'-phosphate + a 5'-hydroxy-ribonucleotide-3'-[RNA].. It carries out the reaction an [RNA] containing uridine + H2O = an [RNA]-3'-uridine-3'-phosphate + a 5'-hydroxy-ribonucleotide-3'-[RNA].. In terms of biological role, endonuclease that catalyzes the cleavage of RNA on the 3' side of pyrimidine nucleotides. Acts on single-stranded and double-stranded RNA. In Pan troglodytes (Chimpanzee), this protein is Ribonuclease pancreatic (RNASE1).